The chain runs to 156 residues: 6,7-dimethyl-8-ribityllumazine synthase (156 aa).

Residues F23, 57–59 (AYE), and 81–83 (AII) contribute to the 5-amino-6-(D-ribitylamino)uracil site. 86 to 87 (GT) contributes to the (2S)-2-hydroxy-3-oxobutyl phosphate binding site. H89 acts as the Proton donor in catalysis. F114 serves as a coordination point for 5-amino-6-(D-ribitylamino)uracil. Residue R128 participates in (2S)-2-hydroxy-3-oxobutyl phosphate binding.

This sequence belongs to the DMRL synthase family.

It carries out the reaction (2S)-2-hydroxy-3-oxobutyl phosphate + 5-amino-6-(D-ribitylamino)uracil = 6,7-dimethyl-8-(1-D-ribityl)lumazine + phosphate + 2 H2O + H(+). Its pathway is cofactor biosynthesis; riboflavin biosynthesis; riboflavin from 2-hydroxy-3-oxobutyl phosphate and 5-amino-6-(D-ribitylamino)uracil: step 1/2. Functionally, catalyzes the formation of 6,7-dimethyl-8-ribityllumazine by condensation of 5-amino-6-(D-ribitylamino)uracil with 3,4-dihydroxy-2-butanone 4-phosphate. This is the penultimate step in the biosynthesis of riboflavin. This Helicobacter acinonychis (strain Sheeba) protein is 6,7-dimethyl-8-ribityllumazine synthase.